The following is a 64-amino-acid chain: Beta-defensin 5 (64 aa).

The N-terminal stretch at 1–23 (MKIHYLLFAFLLVLLSPLAGVFS) is a signal peptide. Cystine bridges form between Cys-32–Cys-60, Cys-39–Cys-53, and Cys-43–Cys-61.

The protein belongs to the beta-defensin family.

The protein localises to the secreted. Its function is as follows. Has antibacterial activity. In Mus musculus (Mouse), this protein is Beta-defensin 5 (Defb5).